A 35-amino-acid polypeptide reads, in one-letter code: Toxin Ado1 (35 aa).

3 disulfide bridges follow: C5–C20, C12–C25, and C19–C32.

The protein localises to the secreted. Its function is as follows. Binds reversibly and blocks P/Q-type voltage-gated calcium channels (Cav). This Agriosphodrus dohrni (Japanese assassin-bug) protein is Toxin Ado1.